The chain runs to 149 residues: Large ribosomal subunit protein uL24 (149 aa).

This sequence belongs to the universal ribosomal protein uL24 family. As to quaternary structure, part of the 50S ribosomal subunit.

In terms of biological role, one of two assembly initiator proteins, it binds directly to the 5'-end of the 23S rRNA, where it nucleates assembly of the 50S subunit. Functionally, one of the proteins that surrounds the polypeptide exit tunnel on the outside of the subunit. The protein is Large ribosomal subunit protein uL24 of Nostoc sp. (strain PCC 7120 / SAG 25.82 / UTEX 2576).